The following is a 372-amino-acid chain: Alginate lyase (372 aa).

Positions 1 to 22 (MKTRLALPCLLGSLLLSSAVHA) are cleaved as a signal peptide. Residues 61–62 (SK), 134–135 (HT), and tyrosine 252 each bind substrate.

The protein belongs to the polysaccharide lyase 5 family.

The protein resides in the periplasm. It carries out the reaction Eliminative cleavage of alginate to give oligosaccharides with 4-deoxy-alpha-L-erythro-hex-4-enuronosyl groups at their non-reducing ends and beta-D-mannuronate at their reducing end.. Monovalent cations such as potassium and sodium enhance activity, as well as a combined action of these cations with magnesium. However, other cations like calcium, cobalt, manganese and zinc, or the presence of EDTA, do not affect the enzymatic activity. Functionally, catalyzes the depolymerization of alginate by cleaving the beta-1,4 glycosidic bond between two adjacent sugar residues via a beta-elimination mechanism. Degrades deacetylated polymannuronate alginate more efficiently than non-deacetylated polyM. Is able to degrade its own alginate, but at a lower efficiency than that produced from M.pyriferia and P.aeruginosa. May serve to degrade mislocalized alginate that is trapped in the periplasmic space. This chain is Alginate lyase, found in Azotobacter chroococcum mcd 1.